A 235-amino-acid chain; its full sequence is Kinetochore protein Spc25 (235 aa).

Positions 44 to 106 (KNILSAKEAI…DMEAQLLRHT (63 aa)) form a coiled coil. The interval 193–216 (EVAGASPVTPSGSERPKATSKHSN) is disordered.

This sequence belongs to the SPC25 family. Component of the Ndc80 complex, which is composed of Ndc80, Nuf2 and Spc25.

The protein resides in the nucleus. Its subcellular location is the chromosome. It is found in the centromere. It localises to the kinetochore. Its function is as follows. Acts as a component of the essential kinetochore-associated Ndc80 complex, which is required for chromosome segregation and spindle checkpoint activity during meiosis and mitosis. Required for kinetochore integrity and the organization of stable microtubule binding sites in the outer plate of the kinetochore. Participates in SAC signaling that responds specifically to disruptions in spindle microtubule dynamics. The NDC80 complex synergistically enhances the affinity of the SKA1 complex for microtubules and may allow the NDC80 complex to track depolymerizing microtubules. This Drosophila pseudoobscura pseudoobscura (Fruit fly) protein is Kinetochore protein Spc25.